Here is a 219-residue protein sequence, read N- to C-terminus: Ribose-5-phosphate isomerase A (219 aa).

Residues 28–31, 81–84, and 94–97 contribute to the substrate site; these read TGST, DGAD, and KGGG. The active-site Proton acceptor is glutamate 103. A substrate-binding site is contributed by lysine 121.

This sequence belongs to the ribose 5-phosphate isomerase family. Homodimer.

It catalyses the reaction aldehydo-D-ribose 5-phosphate = D-ribulose 5-phosphate. It functions in the pathway carbohydrate degradation; pentose phosphate pathway; D-ribose 5-phosphate from D-ribulose 5-phosphate (non-oxidative stage): step 1/1. Catalyzes the reversible conversion of ribose-5-phosphate to ribulose 5-phosphate. This Shewanella sp. (strain MR-4) protein is Ribose-5-phosphate isomerase A.